The following is a 375-amino-acid chain: Superinfection exclusion protein (375 aa).

Positions 1–15 are cleaved as a signal peptide; sequence MIALLILSLACSVSA.

It belongs to the serpin family. Orthopoxvirus OPG040 subfamily. As to quaternary structure, interacts with OPG185/A56 protein.

Its subcellular location is the virion membrane. It is found in the host cell membrane. Negatively regulates superinfection and syncytium formation in infected host cells. Acts in concert with OPG185/A56 protein at the host cell membrane by interacting with and inhibiting the mature virion entry/fusion complex (EFC). This mechanism ensures that new virions released from the cell cannot enter already infected cells. The polypeptide is Superinfection exclusion protein (OPG040) (Cynomys gunnisoni (Gunnison's prairie dog)).